The chain runs to 78 residues: MGMPSMPELLIILLIVVLLFGAKKIPELAKGLGSGIKNFKKAMKEDEEEVATENKKEIEEKTTASTTKTTADQDTTKA.

Residues 1–21 form a helical membrane-spanning segment; the sequence is MGMPSMPELLIILLIVVLLFG. The disordered stretch occupies residues 46–78; it reads DEEEVATENKKEIEEKTTASTTKTTADQDTTKA. The segment covering 52-62 has biased composition (basic and acidic residues); the sequence is TENKKEIEEKT. Low complexity predominate over residues 63 to 78; the sequence is TASTTKTTADQDTTKA.

This sequence belongs to the TatA/E family. As to quaternary structure, the Tat system comprises two distinct complexes: a TatABC complex, containing multiple copies of TatA, TatB and TatC subunits, and a separate TatA complex, containing only TatA subunits. Substrates initially bind to the TatABC complex, which probably triggers association of the separate TatA complex to form the active translocon.

The protein localises to the cell inner membrane. Its function is as follows. Part of the twin-arginine translocation (Tat) system that transports large folded proteins containing a characteristic twin-arginine motif in their signal peptide across membranes. TatA could form the protein-conducting channel of the Tat system. This chain is Sec-independent protein translocase protein TatA, found in Nitratiruptor sp. (strain SB155-2).